A 129-amino-acid polypeptide reads, in one-letter code: Small ribosomal subunit protein uS9 (129 aa).

The protein belongs to the universal ribosomal protein uS9 family.

In Gemmatimonas aurantiaca (strain DSM 14586 / JCM 11422 / NBRC 100505 / T-27), this protein is Small ribosomal subunit protein uS9.